The sequence spans 64 residues: MASIIVRHNESFDDALRRFKRGVAKDGTLQEVRKREFYVKPSVARKLKSEAAQKRARKRARNDH.

Belongs to the bacterial ribosomal protein bS21 family.

The chain is Small ribosomal subunit protein bS21 from Oenococcus oeni (strain ATCC BAA-331 / PSU-1).